The following is an 89-amino-acid chain: Small ribosomal subunit protein uS15 (89 aa).

The segment at 1–23 is disordered; sequence MSLGTEEKQNLINTHQVHPTDTG. The span at 10-23 shows a compositional bias: polar residues; the sequence is NLINTHQVHPTDTG.

Belongs to the universal ribosomal protein uS15 family. Part of the 30S ribosomal subunit. Forms a bridge to the 50S subunit in the 70S ribosome, contacting the 23S rRNA.

Functionally, one of the primary rRNA binding proteins, it binds directly to 16S rRNA where it helps nucleate assembly of the platform of the 30S subunit by binding and bridging several RNA helices of the 16S rRNA. Its function is as follows. Forms an intersubunit bridge (bridge B4) with the 23S rRNA of the 50S subunit in the ribosome. The sequence is that of Small ribosomal subunit protein uS15 from Prochlorococcus marinus (strain NATL2A).